We begin with the raw amino-acid sequence, 244 residues long: Homeobox-leucine zipper protein HOX14 (244 aa).

The tract at residues 25 to 64 (ASGEVQGERPRARRRRRRGARCVGGGGGGGEVDGGDPKKR) is disordered. Positions 35–44 (RARRRRRRGA) are enriched in basic residues. Residues 46–56 (CVGGGGGGGEV) show a composition bias toward gly residues. The homeobox DNA-binding region spans 59-118 (GDPKKRRLSDEQVEMLELSFREERKLETGRKVHLASELGLDPKQVAVWFQNRRARHKSKL). Residues 108 to 167 (QNRRARHKSKLLEEEFSKLKHAHDAAILHKCHLENEVLRLKERLVVAEEEVRRLRSAAGS) are a coiled coil.

It belongs to the HD-ZIP homeobox family. Class I subfamily. Expressed in roots, stems, leaf blades and panicles.

It localises to the nucleus. In terms of biological role, probable transcription factor. The protein is Homeobox-leucine zipper protein HOX14 (HOX14) of Oryza sativa subsp. indica (Rice).